A 249-amino-acid polypeptide reads, in one-letter code: Transcriptional activator protein EsaR (249 aa).

The HTH luxR-type domain maps to 174-239; it reads QSADKTIFSS…QAIRLGVELD (66 aa). The H-T-H motif DNA-binding region spans 198 to 217; that stretch reads YAEIAAITGISVSTVKFHIK.

The protein belongs to the autoinducer-regulated transcriptional regulatory protein family.

In terms of biological role, functions as a potential OhlL-responsive transcriptional regulator. In Pantoea stewartii subsp. stewartii (Erwinia stewartii), this protein is Transcriptional activator protein EsaR (esaR).